We begin with the raw amino-acid sequence, 331 residues long: MPHSVTLRGPSPWGFRLVGGRDFSVPLTISRVHAGSKAALAALCPGDLIQAINGESTELMTHLEAQNRIKGCRDHLTLSVSRPEGRSWPSTPEDNKAQAHRIHIDSEAQDGSPLTSRRPSATGLGPEDGRPGLGSPYGQSPRLPVPHNGSNSEATLLAQMGALHVSPPHSTDPARGLPRSRDCGVDLGSEVYRMLREPAEPAAAEPKQSGSFRYLQGMLEAGEGGERPGPGGPRNLKPTASKLGAPLSGLQGLPECTRCGHGIVGTIVKARDKLYHPECFMCSDCGLNLKQRGYFFLDERLYCESHAKARVKPPEGYDVVAVYPNAKVELV.

The PDZ domain occupies 1–84 (MPHSVTLRGP…HLTLSVSRPE (84 aa)). Disordered regions lie at residues 80-99 (VSRP…KAQA), 105-152 (DSEA…GSNS), and 221-243 (AGEG…ASKL). 4 positions are modified to phosphoserine: Ser112, Ser116, Ser120, and Ser135. In terms of domain architecture, LIM zinc-binding spans 254–313 (PECTRCGHGIVGTIVKARDKLYHPECFMCSDCGLNLKQRGYFFLDERLYCESHAKARVKP).

In terms of assembly, homodimer. Interacts (via C-terminus only or via combined C-terminus and LIM domain, but not LIM domain only) with PTPN13 (via the second or fourth PDZ domains). Found in a complex with PTPN13 and TRIP6. Interacts (via PDZ domain) with ACTN1 and ACTN2 (via C-terminal SDL residues). Interacts (via PDZ domain) with TRIP6 (via the second LIM domain or via the third LIM domain plus C-terminus). Interacts (via LIM domain) with GRIA1 (via C-terminus); this interaction as well as the interaction with alpha-actinin is required for their colocalization in early endosomes. Interacts with PDLIM1. Forms (via LIM domain) a heterodimer with PDLIM3. Interacts directly with SRC (via kinase domain and to a lesser extent the SH2 domain). In terms of processing, phosphorylated on tyrosine residue(s). Can be dephosphorylated by PTPN13.

Its subcellular location is the cytoplasm. It is found in the cytoskeleton. The protein resides in the cell projection. It localises to the dendritic spine. The protein localises to the early endosome membrane. Its subcellular location is the recycling endosome membrane. It is found in the nucleus. The protein resides in the perinuclear region. It localises to the lamellipodium. The protein localises to the synapse. Its subcellular location is the synaptosome. Its function is as follows. Suppresses SRC activation by recognizing and binding to active SRC and facilitating PTPN13-mediated dephosphorylation of SRC 'Tyr-419' leading to its inactivation. Inactivated SRC dissociates from this protein allowing the initiation of a new SRC inactivation cycle. Involved in reorganization of the actin cytoskeleton. In nonmuscle cells, binds to ACTN1 (alpha-actinin-1), increases the affinity of ACTN1 to F-actin (filamentous actin), and promotes formation of actin stress fibers. Involved in regulation of the synaptic AMPA receptor transport in dendritic spines of hippocampal pyramidal neurons directing the receptors toward an insertion at the postsynaptic membrane. Links endosomal surface-internalized GRIA1-containing AMPA receptors to the alpha-actinin/actin cytoskeleton. Increases AMPA receptor-mediated excitatory postsynaptic currents in neurons. The polypeptide is PDZ and LIM domain protein 4 (PDLIM4) (Bos taurus (Bovine)).